The following is a 277-amino-acid chain: 4-hydroxy-tetrahydrodipicolinate reductase (277 aa).

NAD(+) is bound by residues G11–M16 and G110–T112. The active-site Proton donor/acceptor is the H166. (S)-2,3,4,5-tetrahydrodipicolinate is bound at residue H167. K170 acts as the Proton donor in catalysis. G176–T177 contributes to the (S)-2,3,4,5-tetrahydrodipicolinate binding site.

This sequence belongs to the DapB family.

The protein localises to the cytoplasm. It catalyses the reaction (S)-2,3,4,5-tetrahydrodipicolinate + NAD(+) + H2O = (2S,4S)-4-hydroxy-2,3,4,5-tetrahydrodipicolinate + NADH + H(+). The enzyme catalyses (S)-2,3,4,5-tetrahydrodipicolinate + NADP(+) + H2O = (2S,4S)-4-hydroxy-2,3,4,5-tetrahydrodipicolinate + NADPH + H(+). The protein operates within amino-acid biosynthesis; L-lysine biosynthesis via DAP pathway; (S)-tetrahydrodipicolinate from L-aspartate: step 4/4. Its function is as follows. Catalyzes the conversion of 4-hydroxy-tetrahydrodipicolinate (HTPA) to tetrahydrodipicolinate. In Parasynechococcus marenigrum (strain WH8102), this protein is 4-hydroxy-tetrahydrodipicolinate reductase.